A 485-amino-acid polypeptide reads, in one-letter code: Aerolysin-5 (485 aa).

A signal peptide spans 1–23 (MQKLKITGLSLIISGLLMAQRHA). 2 disulfide bridges follow: Cys-42–Cys-98 and Cys-182–Cys-187. Residues 68 to 84 (WQISGLANGWVIMGPVY) form an interaction with host N-linked glycan region. Residues 256–288 (YGLSEKVTTKNKFKWPLVGETELSIEIAANQSW) are part of the transmembrane beta-barrel after proteolytic activation of the toxin and insertion into the host membrane. The tract at residues 346–355 (RWGGNAWYTH) is interaction with glycans from host GPI-anchor. A propeptide spanning residues 446 to 485 (AADGKAPRALSARRGEQGLRLAIPLECRKSSPGLASATSA) is cleaved from the precursor.

The protein belongs to the aerolysin family. Homodimer in solution; homoheptamer in the host membrane. After binding to GPI-anchored proteins in target membranes and proteolytic removal of the C-terminal propeptide, the protein assembles into a heptameric pre-pore complex. A further conformation change leads to insertion into the host membrane. Proteolytic cleavage and subsequent release of the propeptide trigger a major conformation change, leading to the formation of a heptameric pre-pore that then inserts into the host membrane.

The protein localises to the secreted. It is found in the host cell membrane. Secreted, cytolytic toxin that forms pores in host membranes after proteolytic removal of a C-terminal propeptide, leading to destruction of the membrane permeability barrier and cell death. The pores are formed by transmembrane beta-strands and are approximately 3 nm in diameter. This Aeromonas hydrophila protein is Aerolysin-5 (ahh5).